The following is a 162-amino-acid chain: MDEKDLATQPEEAGQDPRLPGPHEDPRRQEGVEAEKAEGPLAPHPQGERLSQPPPAAGGKLLSLKGDRAFQRLRQGRMGRGRFLNVKWLPASELRVGIVVSKKVGKAVVRNRIKRRLREILRRLHLPKAHLLVIASPEAREATYAELFQDLIRALKKSGLIQ.

Residues 1 to 63 are disordered; it reads MDEKDLATQP…PPAAGGKLLS (63 aa). The segment covering 21–38 has biased composition (basic and acidic residues); that stretch reads GPHEDPRRQEGVEAEKAE.

The protein belongs to the RnpA family. In terms of assembly, consists of a catalytic RNA component (M1 or rnpB) and a protein subunit.

It catalyses the reaction Endonucleolytic cleavage of RNA, removing 5'-extranucleotides from tRNA precursor.. Functionally, RNaseP catalyzes the removal of the 5'-leader sequence from pre-tRNA to produce the mature 5'-terminus. It can also cleave other RNA substrates such as 4.5S RNA. The protein component plays an auxiliary but essential role in vivo by binding to the 5'-leader sequence and broadening the substrate specificity of the ribozyme. This Thermus scotoductus protein is Ribonuclease P protein component.